The primary structure comprises 852 residues: Potassium voltage-gated channel subfamily KQT member 2 (852 aa).

Topologically, residues methionine 1–glycine 90 are cytoplasmic. At serine 52 the chain carries Phosphoserine; by PKA. A helical transmembrane segment spans residues tryptophan 91–serine 113. Over threonine 114–glutamate 123 the chain is Extracellular. A helical transmembrane segment spans residues glycine 124–isoleucine 145. The Cytoplasmic segment spans residues tryptophan 146–phenylalanine 163. The helical transmembrane segment at alanine 164 to leucine 183 threads the bilayer. Topologically, residues alanine 184–alanine 196 are extracellular. Residues leucine 197–glycine 215 form a helical; Voltage-sensor membrane-spanning segment. Residue arginine 214 participates in a 1,2-diacyl-sn-glycero-3-phospho-(1D-myo-inositol-4,5-bisphosphate) binding. Residues glycine 216–alanine 227 are Cytoplasmic-facing. The mediates interaction with SLC5A3 stretch occupies residues glycine 222 to glutamine 323. Residues histidine 228–alanine 253 traverse the membrane as a helical segment. A 1,2-diacyl-sn-glycero-3-phospho-(1D-myo-inositol-4,5-bisphosphate) is bound at residue lysine 230. Over glutamate 254 to threonine 263 the chain is Extracellular. Residues tyrosine 264–threonine 276 constitute an intramembrane region (pore-forming). A Selectivity filter motif is present at residues threonine 277–aspartate 282. Residues threonine 277 to threonine 287 are Extracellular-facing. Residues tryptophan 288–serine 314 form a helical membrane-spanning segment. At glycine 315–lysine 852 the chain is on the cytoplasmic side. Residues alanine 317–serine 522 are mediates interaction with calmodulin. A 1,2-diacyl-sn-glycero-3-phospho-(1D-myo-inositol-4,5-bisphosphate) is bound at residue lysine 327. The interval threonine 404–glycine 469 is disordered. Positions proline 440–aspartate 457 are enriched in polar residues. Phosphoserine is present on residues serine 448, serine 450, serine 454, serine 458, serine 460, and serine 489. Disordered stretches follow at residues glycine 579–serine 601, glycine 643–histidine 662, and isoleucine 672–serine 718. Basic and acidic residues predominate over residues threonine 583 to alanine 592. A Phosphoserine modification is found at serine 655. Phosphoserine is present on residues serine 781 and serine 783. The tract at residues glutamate 818–lysine 852 is disordered.

It belongs to the potassium channel family. KQT (TC 1.A.1.15) subfamily. Kv7.2/KCNQ2 sub-subfamily. Heterotetramer with KCNQ3; forms heterotetrameric M-channel responsible for the M-current. Homotetrameric; forms a functional homotetrameric channel resulting in the expression of a small M-current. Interacts with calmodulin; the interaction is calcium-independent, constitutive and participates in the proper assembly of a functional M-channel. May associate with KCNE2. Interacts with IQCJ-SCHIP1. Interacts (via the pore module) with SLC5A3/SMIT1; forms a coregulatory complex that alters ion selectivity, voltage dependence and gating kinetics of the channel. Interacts with AKAP5; the interaction may help KCNQ2 channel complex to retain calcium-bound calmodulin. KCNQ2/KCNQ3 heteromeric current can be increased by intracellular cyclic AMP, an effect that depends on phosphorylation of Ser-52 in the N-terminal region. Post-translationally, KCNQ2/KCNQ3 are ubiquitinated by NEDD4L. Ubiquitination leads to protein degradation. Degradation induced by NEDD4L is inhibited by USP36. In terms of tissue distribution, expressed in brain and sympathetic ganglia. In brain, expressed in cortex, hippocampus, and cerebellum. In sympathetic ganglia, expressed at lower levels in celiac ganglia and superior mesenteric ganglia than in superior cervical ganglia.

Its subcellular location is the cell membrane. The catalysed reaction is K(+)(in) = K(+)(out). It carries out the reaction Rb(+)(in) = Rb(+)(out). The enzyme catalyses Cs(+)(in) = Cs(+)(out). It catalyses the reaction Na(+)(in) = Na(+)(out). Phosphatidylinositol-4,5-bisphosphate (PIP2) potentiates the activation of KCNQ channels by enhancing the electro-mechanical coupling of the voltage-sensing domain (VSD) and the pore-forming domain (PD). In the closed state of the channel, PIP2 is anchored at the S2-S3 loop; upon channel activation, PIP2 interacts with the S4-S5 linker and is involved in channel gating. Calcium suppresses KCNQ2 and KCNQ2-KCNQ3 channel currents, with calcium-bound calmodulin inducing a change in channel configuration which leads to the reduction of channel affinity for PIP2 and subsequent current suppression. Functionally, pore-forming subunit of the voltage-gated potassium (Kv) M-channel which is responsible for the M-current, a key controller of neuronal excitability. M-channel is composed of pore-forming subunits KCNQ2 and KCNQ3 assembled as heterotetramers. The native M-current has a slowly activating and deactivating potassium conductance which plays a critical role in determining the subthreshold electrical excitability of neurons as well as the responsiveness to synaptic inputs. M-channel is selectively permeable in vitro to other cations besides potassium, in decreasing order of affinity K(+) &gt; Rb(+) &gt; Cs(+) &gt; Na(+). M-channel association with SLC5A3/SMIT1 alters channel ion selectivity, increasing Na(+) and Cs(+) permeation relative to K(+). Suppressed by activation of the muscarinic acetylcholine receptor CHRM1. In Rattus norvegicus (Rat), this protein is Potassium voltage-gated channel subfamily KQT member 2.